Here is a 570-residue protein sequence, read N- to C-terminus: MRVLGLNGWPRDFHDASAALLVDGRIAAFAEEERFTRKKHGYNTAPVQAAAFCLAQAGLTVDDLDAVAFGWDLPAMYRERLGGWPHSDSEALDILLPRDVFPRRTDPPLHFVQHHLAHAASAYYFSGEDRGAVLIVDGQGEEECVTLAHAEGGKITVLDTVPGAWSLGFFYEHVSEYTGLGGDNPGKLMGLAAHGTTVDETLSAFAFDSDGYRLNLIDPQARDPEDWDEYSVTERAWFAHLERIYRLPPNEFVRRYDPAKGRVVRDTRRDPYEYRDLAATAQAALERAVFGLADSVLARTGERTLFVAGGVGLNATMNGKLLTRSTVDKMFVPPVASDIGVSLGAAAAVAVELGDRIAPMGDTAAWGPEFSPDQVRAALDRTGLAYREPANLEREVAALIASGKVVGWAQGRGEVGPRALGQRSLLGSAHSPTMRDHINLRVKDREWWRPFAPSMLRSVSDQVLEVDADFPYMIMTTKVRAAYAERLPSVVHEDWSTRPQTVTEASNPRYHRMLTELGDLVGDPVCLNTSFNDRGEPIVSSPADALLTFSRLPIDALAVGPYLVTKDLRH.

The tract at residues 1-354 is kae1-like; the sequence is MRVLGLNGWP…AAAAVAVELG (354 aa). Residue Asp12 coordinates tobramycin. Catalysis depends on His14, which acts as the Proton acceptor. Lys39 is an ATP binding site. Fe cation contacts are provided by His114, His118, and Asp137. Residues Gln139, Gly168, and Glu172 each coordinate carbamoyl adenylate. The tobramycin site is built by Glu172 and Asp228. Gly310 and Asn314 together coordinate carbamoyl adenylate. Residue Asp338 coordinates Fe cation. The yrdC-like stretch occupies residues 367–570; the sequence is GPEFSPDQVR…PYLVTKDLRH (204 aa). Positions 418 and 449 each coordinate ATP. 418 to 419 provides a ligand contact to carbamoyl phosphate; that stretch reads RA. Carbamoyl phosphate is bound by residues Arg498 and 528–530; that span reads NTS.

The protein belongs to the NodU/CmcH family. Requires Fe(2+) as cofactor.

The enzyme catalyses tobramycin + carbamoyl phosphate + ATP + H2O = nebramycin 5' + AMP + phosphate + diphosphate + H(+). It catalyses the reaction kanamycin A + carbamoyl phosphate + ATP + H2O = 6''-O-carbamoylkanamycin A + AMP + phosphate + diphosphate + H(+). It carries out the reaction carbamoyl phosphate + ATP + H2O = carbamoyl adenylate + phosphate + diphosphate. The catalysed reaction is tobramycin + carbamoyl adenylate = nebramycin 5' + AMP + H(+). The enzyme catalyses carbamoyl adenylate + kanamycin A = 6''-O-carbamoylkanamycin A + AMP + H(+). The protein operates within antibiotic biosynthesis; kanamycin biosynthesis. It functions in the pathway antibiotic biosynthesis; tobramycin biosynthesis. With respect to regulation, ADP inhibits the formation of nebramycin 5'. Functionally, tobZ is involved in the biosynthesis of the 2-deoxystreptamine-containing aminoglycoside antibiotics such as nebramycin 5 and 6-O-carbamoylkanamycin. Catalyzes the hydrolysis of carbamoyl phosphate and its subsequent adenylation by ATP to yield O-carbamoyladenylate. Then it catalyzes the transfer of the carbamoyl moiety from O-carbamoyladenylate to the tobramycin 6-hydroxy group to yield nebramycin 5'. It catalyzes the same reaction with kanamycin A. These reactions are considerably slower in the presence of deoxy-ATP. This chain is nebramycin 5' synthase (tobZ), found in Streptoalloteichus tenebrarius (strain ATCC 17920 / DSM 40477 / JCM 4838 / CBS 697.72 / NBRC 16177 / NCIMB 11028 / NRRL B-12390 / A12253. 1 / ISP 5477) (Streptomyces tenebrarius).